Reading from the N-terminus, the 395-residue chain is F-box protein At5g46170 (395 aa).

One can recognise an F-box domain in the interval 24–72 (IDHFDHLPDSILLLVFNKIGDVKALGRCCVVSRRFHSLVPQVDNVVVRV). Residues 122-158 (TKRSSSSCGGSGSSSSSLSISGDDDGGEIEQGGVTHH) are disordered. Residues 125–142 (SSSSCGGSGSSSSSLSIS) show a composition bias toward low complexity.

The protein is F-box protein At5g46170 of Arabidopsis thaliana (Mouse-ear cress).